Here is a 262-residue protein sequence, read N- to C-terminus: Phosphonates import ATP-binding protein PhnC (262 aa).

The ABC transporter domain maps to 5 to 253; it reads IRVEKLAKTF…RFDHLYRSIN (249 aa). 37 to 44 contributes to the ATP binding site; it reads GPSGSGKS.

Belongs to the ABC transporter superfamily. Phosphonates importer (TC 3.A.1.9.1) family. As to quaternary structure, the complex is composed of two ATP-binding proteins (PhnC), two transmembrane proteins (PhnE) and a solute-binding protein (PhnD).

The protein localises to the cell inner membrane. The enzyme catalyses phosphonate(out) + ATP + H2O = phosphonate(in) + ADP + phosphate + H(+). Its function is as follows. Part of the ABC transporter complex PhnCDE involved in phosphonates import. Responsible for energy coupling to the transport system. The chain is Phosphonates import ATP-binding protein PhnC from Shigella flexneri serotype 5b (strain 8401).